The following is a 792-amino-acid chain: Kinesin-associated protein 3 (792 aa).

Phosphoserine is present on Ser-60. Positions 103 to 119 (LSGKEKKEKSSKPKDPP) are enriched in basic and acidic residues. The segment at 103 to 124 (LSGKEKKEKSSKPKDPPPFEGM) is disordered. ARM repeat units follow at residues 333–373 (FMEN…NLSF), 374–412 (DTGLRNKMVQVGLLPKLTALLGNDNYKQIAMCVLYHISM), 494–533 (DGPTKNLFIDYVGDLAAQISNDEEEEFVIECLGTLANLTI), 578–620 (DDSC…QMVF), and 621–662 (HQAT…IIAE).

Heterotrimer of KIFAP3, KIF3A and KIF3B. Interacts with RAP1GDS1/SMG GDS. Interacts with SMC3 subunit of the cohesin complex. Post-translationally, phosphorylated on tyrosine residues by SRC in vitro; this reduces the binding affinity of the protein for RAP1GDS1.

Functionally, involved in tethering the chromosomes to the spindle pole and in chromosome movement. Binds to the tail domain of the KIF3A/KIF3B heterodimer to form a heterotrimeric KIF3 complex and may regulate the membrane binding of this complex. This Homo sapiens (Human) protein is Kinesin-associated protein 3 (KIFAP3).